We begin with the raw amino-acid sequence, 197 residues long: dITP/XTP pyrophosphatase (197 aa).

8 to 13 (TGNPGK) is a binding site for substrate. Positions 40 and 69 each coordinate Mg(2+). The active-site Proton acceptor is D69. Substrate-binding positions include S70, 154–157 (FGYD), K177, and 182–183 (HR).

This sequence belongs to the HAM1 NTPase family. As to quaternary structure, homodimer. Requires Mg(2+) as cofactor.

It catalyses the reaction XTP + H2O = XMP + diphosphate + H(+). The enzyme catalyses dITP + H2O = dIMP + diphosphate + H(+). The catalysed reaction is ITP + H2O = IMP + diphosphate + H(+). In terms of biological role, pyrophosphatase that catalyzes the hydrolysis of nucleoside triphosphates to their monophosphate derivatives, with a high preference for the non-canonical purine nucleotides XTP (xanthosine triphosphate), dITP (deoxyinosine triphosphate) and ITP. Seems to function as a house-cleaning enzyme that removes non-canonical purine nucleotides from the nucleotide pool, thus preventing their incorporation into DNA/RNA and avoiding chromosomal lesions. The protein is dITP/XTP pyrophosphatase of Yersinia pestis.